The primary structure comprises 242 residues: DNA repair protein RecO (242 aa).

Belongs to the RecO family. In terms of assembly, monomer.

In terms of biological role, involved in DNA repair and RecF pathway recombination. This chain is DNA repair protein RecO, found in Shigella dysenteriae serotype 1 (strain Sd197).